Here is a 159-residue protein sequence, read N- to C-terminus: uncharacterized protein (159 aa).

It belongs to the SufE family.

This is an uncharacterized protein from Synechocystis sp. (strain ATCC 27184 / PCC 6803 / Kazusa).